The sequence spans 161 residues: Urease accessory protein UreE (161 aa).

Belongs to the UreE family.

The protein localises to the cytoplasm. Involved in urease metallocenter assembly. Binds nickel. Probably functions as a nickel donor during metallocenter assembly. This Pseudarthrobacter chlorophenolicus (strain ATCC 700700 / DSM 12829 / CIP 107037 / JCM 12360 / KCTC 9906 / NCIMB 13794 / A6) (Arthrobacter chlorophenolicus) protein is Urease accessory protein UreE.